The sequence spans 350 residues: Ion-translocating oxidoreductase complex subunit D (350 aa).

A run of 3 helical transmembrane segments spans residues 25–45, 89–109, and 129–149; these read ILCA…GTVI, IPPL…IVIV, and VMLL…SVIA. FMN phosphoryl threonine is present on T185. 5 helical membrane passes run 212 to 232, 239 to 259, 264 to 284, 298 to 318, and 319 to 339; these read GFGV…LVML, WHIT…GYLL, FTGP…FFIA, LVFG…GGYP, and DAFA…DHYM.

This sequence belongs to the NqrB/RnfD family. In terms of assembly, the complex is composed of six subunits: RnfA, RnfB, RnfC, RnfD, RnfE and RnfG. FMN serves as cofactor.

It is found in the cell inner membrane. Its function is as follows. Part of a membrane-bound complex that couples electron transfer with translocation of ions across the membrane. The polypeptide is Ion-translocating oxidoreductase complex subunit D (Shewanella sediminis (strain HAW-EB3)).